We begin with the raw amino-acid sequence, 284 residues long: MSAKIIDGKAIALSVRQRVAARVAERKAKGLRAPGLAVVLVGEDAASQVYVGSKRRACEEVGFISKSYDLAPTITQDELLALIDQLNADPTIDGVLVQLPLPAHLDSTQVIERILPNKDVDGFHPYNVGRLAQRIPALRPCTPKGMMTLLENTGVKIKGMHAVVVGASNIVGRPMTLELLLAGCTTTTCHRFTKGLEQFVRQADILVVAVGKAEFIPGEWIKPGAIVLDVGINRLSNGKLVGDVEYPTAAQHASFITPVPGGVGPMTVATLIENTLQACEQYHS.

NADP(+) is bound by residues 166-168 (GAS) and Ile232.

It belongs to the tetrahydrofolate dehydrogenase/cyclohydrolase family. As to quaternary structure, homodimer.

It catalyses the reaction (6R)-5,10-methylene-5,6,7,8-tetrahydrofolate + NADP(+) = (6R)-5,10-methenyltetrahydrofolate + NADPH. It carries out the reaction (6R)-5,10-methenyltetrahydrofolate + H2O = (6R)-10-formyltetrahydrofolate + H(+). It functions in the pathway one-carbon metabolism; tetrahydrofolate interconversion. Its function is as follows. Catalyzes the oxidation of 5,10-methylenetetrahydrofolate to 5,10-methenyltetrahydrofolate and then the hydrolysis of 5,10-methenyltetrahydrofolate to 10-formyltetrahydrofolate. The sequence is that of Bifunctional protein FolD from Tolumonas auensis (strain DSM 9187 / NBRC 110442 / TA 4).